Reading from the N-terminus, the 166-residue chain is UPF0304 protein VS_1049 (166 aa).

The protein belongs to the UPF0304 family.

The protein is UPF0304 protein VS_1049 of Vibrio atlanticus (strain LGP32) (Vibrio splendidus (strain Mel32)).